Here is a 208-residue protein sequence, read N- to C-terminus: Myosin light chain 6B (208 aa).

Residues 1 to 51 are disordered; it reads MPPKKDVPVKKPAGPSISKPAAKPAAAGAPPAKTKAEPAVPQAPQKTQEPP. Low complexity predominate over residues 10 to 40; sequence KKPAGPSISKPAAKPAAAGAPPAKTKAEPAV. EF-hand domains follow at residues 64–99, 141–176, and 176–208; these read DQLEEFKEAFELFDRVGDGKILYSQCGDVMRALGQN, GTYEDYLEGFRVFDKEGNGKVMGAELRHVLTTLGEK, and KMTEEEVETVLAGHEDSNGCINYEAFLKHILSV.

Myosin is a hexamer of 2 heavy chains and 4 light chains.

In terms of biological role, regulatory light chain of myosin. Does not bind calcium. The protein is Myosin light chain 6B (MYL6B) of Homo sapiens (Human).